The following is a 153-amino-acid chain: MATASAMAGPSSETTSEEQLITQEPKEANSTTSQKQSKQRKRGRHGPRRCHSNCRGDSFATYFRRVLKQVHQGLSLSREAVSVMDSLVHDILDRIATEAGHLARSTKRQTITAWETRMAVRLLLPGQMGKLAESEGTKAVLRTSLYAIQQQRK.

The tract at residues 1-54 (MATASAMAGPSSETTSEEQLITQEPKEANSTTSQKQSKQRKRGRHGPRRCHSNC) is disordered. Polar residues predominate over residues 11 to 36 (SSETTSEEQLITQEPKEANSTTSQKQ). Residues 37–52 (SKQRKRGRHGPRRCHS) are compositionally biased toward basic residues.

This sequence belongs to the histone H2B family. Can replace the conventional histone H2B in the nucleosome. The nucleosome is a histone octamer containing two molecules each of H2A, H2B, H3 and H4 assembled in one H3-H4 heterotetramer and two H2A-H2B heterodimers. The octamer wraps approximately 147 bp of DNA. In terms of tissue distribution, testis-specific (at protein level).

The protein resides in the nucleus membrane. It is found in the chromosome. It localises to the telomere. Functionally, atypical histone H2B that can form nucleosomes structurally and dynamically indistinguishable from those containing conventional H2B. Nucleosomes wrap and compact DNA into chromatin, limiting DNA accessibility to the cellular machineries which require DNA as a template. Histones thereby play a central role in transcription regulation, DNA repair, DNA replication and chromosomal stability. DNA accessibility is regulated via a complex set of post-translational modifications of histones, also called histone code, and nucleosome remodeling. However, unlike conventional H2B, does not recruit chromosome condensation factors and does not participate in the assembly of mitotic chromosomes. May be important for telomere function and play a role in spermatogenesis. In Homo sapiens (Human), this protein is Histone H2B type W-T.